Here is a 320-residue protein sequence, read N- to C-terminus: Cytochrome f (320 aa).

The first 35 residues, 1–35 (MQTINTFSWIKEQITRSISISLILYIITRSSIANA), serve as a signal peptide directing secretion. The heme site is built by tyrosine 36, cysteine 56, cysteine 59, and histidine 60. A helical transmembrane segment spans residues 286–305 (IQGLLFFFASVILAQIFLVL).

Belongs to the cytochrome f family. As to quaternary structure, the 4 large subunits of the cytochrome b6-f complex are cytochrome b6, subunit IV (17 kDa polypeptide, petD), cytochrome f and the Rieske protein, while the 4 small subunits are PetG, PetL, PetM and PetN. The complex functions as a dimer. It depends on heme as a cofactor.

Its subcellular location is the plastid. It localises to the chloroplast thylakoid membrane. Functionally, component of the cytochrome b6-f complex, which mediates electron transfer between photosystem II (PSII) and photosystem I (PSI), cyclic electron flow around PSI, and state transitions. The polypeptide is Cytochrome f (petA) (Spinacia oleracea (Spinach)).